Reading from the N-terminus, the 130-residue chain is Large ribosomal subunit protein bL20c (130 aa).

Belongs to the bacterial ribosomal protein bL20 family.

The protein localises to the plastid. It is found in the chloroplast. Binds directly to 23S ribosomal RNA and is necessary for the in vitro assembly process of the 50S ribosomal subunit. It is not involved in the protein synthesizing functions of that subunit. The sequence is that of Large ribosomal subunit protein bL20c from Oenothera argillicola (Appalachian evening primrose).